We begin with the raw amino-acid sequence, 275 residues long: 4-hydroxy-tetrahydrodipicolinate reductase (275 aa).

NAD(+)-binding positions include 13–18 (GAAGKM), 108–110 (GTT), and 134–137 (APNF). His164 functions as the Proton donor/acceptor in the catalytic mechanism. His165 is a binding site for (S)-2,3,4,5-tetrahydrodipicolinate. Catalysis depends on Lys168, which acts as the Proton donor. 174–175 (GT) contributes to the (S)-2,3,4,5-tetrahydrodipicolinate binding site.

This sequence belongs to the DapB family.

It localises to the cytoplasm. It carries out the reaction (S)-2,3,4,5-tetrahydrodipicolinate + NAD(+) + H2O = (2S,4S)-4-hydroxy-2,3,4,5-tetrahydrodipicolinate + NADH + H(+). The enzyme catalyses (S)-2,3,4,5-tetrahydrodipicolinate + NADP(+) + H2O = (2S,4S)-4-hydroxy-2,3,4,5-tetrahydrodipicolinate + NADPH + H(+). The protein operates within amino-acid biosynthesis; L-lysine biosynthesis via DAP pathway; (S)-tetrahydrodipicolinate from L-aspartate: step 4/4. Functionally, catalyzes the conversion of 4-hydroxy-tetrahydrodipicolinate (HTPA) to tetrahydrodipicolinate. The sequence is that of 4-hydroxy-tetrahydrodipicolinate reductase from Synechocystis sp. (strain ATCC 27184 / PCC 6803 / Kazusa).